Reading from the N-terminus, the 337-residue chain is WRKY transcription factor 23 (337 aa).

The segment at isoleucine 100–alanine 160 is disordered. Positions proline 106–alanine 118 are enriched in low complexity. Basic residues predominate over residues histidine 142–lysine 155. Residues serine 168–proline 233 constitute a DNA-binding region (WRKY).

It belongs to the WRKY group II-c family.

Its subcellular location is the nucleus. Transcription factor. Interacts specifically with the W box (5'-(T)TGAC[CT]-3'), a frequently occurring elicitor-responsive cis-acting element. The chain is WRKY transcription factor 23 (WRKY23) from Arabidopsis thaliana (Mouse-ear cress).